The primary structure comprises 695 residues: Protein MALE DISCOVERER 1 (695 aa).

The N-terminal stretch at Met1–Ser29 is a signal peptide. Topologically, residues Leu30–Tyr340 are extracellular. N-linked (GlcNAc...) asparagine glycosylation is found at Asn56 and Asn80. LRR repeat units follow at residues Lys75–Ser98, Glu99–Phe121, Lys123–Lys144, and Thr147–Arg168. Residue Asn247 is glycosylated (N-linked (GlcNAc...) asparagine). Residues Pro302–Arg325 form a disordered region. The span at Pro303–Pro314 shows a compositional bias: pro residues. A glycan (N-linked (GlcNAc...) asparagine) is linked at Asn316. A helical membrane pass occupies residues Val341 to Phe361. The Cytoplasmic portion of the chain corresponds to Arg362 to Thr695. Residues Lys363–Ile668 enclose the Protein kinase domain. At Ser652 the chain carries Phosphoserine.

This sequence belongs to the protein kinase superfamily. Ser/Thr protein kinase family. As to quaternary structure, homodimer. Interacts with MIK1, MIK2 and LURE1.2. LURE1.2 enhances the heterodimerization of MDIS1 with MIK1 or MIK2. In terms of processing, phosphorylated by MIK1. As to expression, expressed in pollen tubes and seedlings.

It localises to the cell membrane. It is found in the endomembrane system. The enzyme catalyses L-seryl-[protein] + ATP = O-phospho-L-seryl-[protein] + ADP + H(+). It catalyses the reaction L-threonyl-[protein] + ATP = O-phospho-L-threonyl-[protein] + ADP + H(+). In terms of biological role, involved in the pollen tube perception of the female signal. This chain is Protein MALE DISCOVERER 1, found in Arabidopsis thaliana (Mouse-ear cress).